Consider the following 132-residue polypeptide: Replication enhancer protein (132 aa).

Belongs to the geminiviridae replication enhancer protein family. In terms of assembly, homooligomer. Interacts with the replication-associated protein (REP). Interacts with host proliferating cell nuclear antigen (PCNA). Interacts with host retinoblastoma-related protein 1 (RBR1), and may thereby deregulate the host cell cycle. Oligomerization and interaction with PCNA are necessary for optimal replication enhancement.

Increases viral DNA accumulation. Enhances infectivity and symptom expression. In Tomato mottle virus (isolate Florida) (ToMoV), this protein is Replication enhancer protein.